Here is a 149-residue protein sequence, read N- to C-terminus: MSFLLPKLTSKKEVDQAIKSTAEKVLVLRFGRDEDPVCLQLDDILSKTSADLSKMAAIYLVDVDHTPVYTQYFDISYIPSTVFFFNGQHMKVDYGSPDHTKFVGSFKTKQDFIDLIEVIYRGAMRGKLIVQSPIDPKNVPKYDLLYQDI.

Belongs to the DIM1 family. In terms of assembly, homodimer. Interacts with the U5-102 kDa protein subunit of the spliceosome.

It localises to the nucleus. Its function is as follows. Essential role in pre-mRNA splicing. Required in cell cycle progression for S/G(2) transition. The polypeptide is Thioredoxin-like protein 4B (Txnl4b) (Mus musculus (Mouse)).